The primary structure comprises 53 residues: HOXB-AS3 peptide (53 aa).

Residues 1–53 form a disordered region; sequence MPVLPGTQRYPHQRRRFQAAGGGAESGKRGSEEAPGVAWSGSESGRDAATPAW.

In terms of assembly, interacts with HNRNPA1 (via the RGG-box). Interacts with IGF2BP2.

In terms of biological role, blocks the binding of HNRNPA1 to the intronic sequences flanking exon 9 of the PKM gene by competitively binding to the HNRNPA1 RGG-box motif. This inhibits inclusion of exon 9 and promotes inclusion of exon 10, suppressing formation of the PKM M2 isoform and promoting production of the M1 isoform. Also suppresses HNRNPA1-mediated processing of microRNA 18a (miR-18a). Promotes MYC stability through interaction with IGF2BP2. The protein is HOXB-AS3 peptide of Homo sapiens (Human).